We begin with the raw amino-acid sequence, 333 residues long: Ketol-acid reductoisomerase (NADP(+)) (333 aa).

The region spanning threonine 6 to threonine 186 is the KARI N-terminal Rossmann domain. Residues tyrosine 29–glutamine 32, lysine 52, serine 55, serine 57, and aspartate 87–glutamine 90 contribute to the NADP(+) site. Residue histidine 112 is part of the active site. Glycine 138 is a binding site for NADP(+). The KARI C-terminal knotted domain maps to threonine 187–serine 332. 4 residues coordinate Mg(2+): aspartate 195, glutamate 199, glutamate 231, and glutamate 235. Serine 256 serves as a coordination point for substrate.

It belongs to the ketol-acid reductoisomerase family. The cofactor is Mg(2+).

The enzyme catalyses (2R)-2,3-dihydroxy-3-methylbutanoate + NADP(+) = (2S)-2-acetolactate + NADPH + H(+). It carries out the reaction (2R,3R)-2,3-dihydroxy-3-methylpentanoate + NADP(+) = (S)-2-ethyl-2-hydroxy-3-oxobutanoate + NADPH + H(+). Its pathway is amino-acid biosynthesis; L-isoleucine biosynthesis; L-isoleucine from 2-oxobutanoate: step 2/4. It functions in the pathway amino-acid biosynthesis; L-valine biosynthesis; L-valine from pyruvate: step 2/4. In terms of biological role, involved in the biosynthesis of branched-chain amino acids (BCAA). Catalyzes an alkyl-migration followed by a ketol-acid reduction of (S)-2-acetolactate (S2AL) to yield (R)-2,3-dihydroxy-isovalerate. In the isomerase reaction, S2AL is rearranged via a Mg-dependent methyl migration to produce 3-hydroxy-3-methyl-2-ketobutyrate (HMKB). In the reductase reaction, this 2-ketoacid undergoes a metal-dependent reduction by NADPH to yield (R)-2,3-dihydroxy-isovalerate. The protein is Ketol-acid reductoisomerase (NADP(+)) of Tropheryma whipplei (strain TW08/27) (Whipple's bacillus).